Here is a 385-residue protein sequence, read N- to C-terminus: Ribosomal RNA large subunit methyltransferase G (385 aa).

It belongs to the methyltransferase superfamily. RlmG family.

The protein resides in the cytoplasm. The enzyme catalyses guanosine(1835) in 23S rRNA + S-adenosyl-L-methionine = N(2)-methylguanosine(1835) in 23S rRNA + S-adenosyl-L-homocysteine + H(+). Functionally, specifically methylates the guanine in position 1835 (m2G1835) of 23S rRNA. This chain is Ribosomal RNA large subunit methyltransferase G, found in Vibrio parahaemolyticus serotype O3:K6 (strain RIMD 2210633).